A 1059-amino-acid polypeptide reads, in one-letter code: Carbamoyl phosphate synthase large chain (1059 aa).

Residues 1 to 401 (MPKRKDIQKV…AMLKAVRSLE (401 aa)) are carboxyphosphate synthetic domain. Residues arginine 129, arginine 169, glycine 175, glycine 176, arginine 208, isoleucine 210, glutamate 215, glycine 241, valine 242, histidine 243, glutamine 284, and glutamate 298 each coordinate ATP. The ATP-grasp 1 domain maps to 133–327 (KALMERLNEP…IAKMAAKIAV (195 aa)). Residues glutamine 284, glutamate 298, and asparagine 300 each contribute to the Mg(2+) site. Glutamine 284, glutamate 298, and asparagine 300 together coordinate Mn(2+). The tract at residues 402 to 546 (IGVTGLNDLT…YATYERENES (145 aa)) is oligomerization domain. A carbamoyl phosphate synthetic domain region spans residues 547–929 (VRSKKPSVIV…ALYKAFVASN (383 aa)). Residues 671–861 (DQVIKTLALP…LAQLATRVML (191 aa)) enclose the ATP-grasp 2 domain. 10 residues coordinate ATP: arginine 707, serine 746, leucine 748, glutamate 752, glycine 777, valine 778, histidine 779, serine 780, glutamine 820, and glutamate 832. Glutamine 820, glutamate 832, and asparagine 834 together coordinate Mg(2+). Mn(2+) contacts are provided by glutamine 820, glutamate 832, and asparagine 834. Residues 930–1059 (IKVPQYGNVL…SRSFTVNEMK (130 aa)) form the MGS-like domain. Positions 930-1059 (IKVPQYGNVL…SRSFTVNEMK (130 aa)) are allosteric domain.

This sequence belongs to the CarB family. In terms of assembly, composed of two chains; the small (or glutamine) chain promotes the hydrolysis of glutamine to ammonia, which is used by the large (or ammonia) chain to synthesize carbamoyl phosphate. Tetramer of heterodimers (alpha,beta)4. The cofactor is Mg(2+). Mn(2+) serves as cofactor.

The enzyme catalyses hydrogencarbonate + L-glutamine + 2 ATP + H2O = carbamoyl phosphate + L-glutamate + 2 ADP + phosphate + 2 H(+). It catalyses the reaction hydrogencarbonate + NH4(+) + 2 ATP = carbamoyl phosphate + 2 ADP + phosphate + 2 H(+). The protein operates within amino-acid biosynthesis; L-arginine biosynthesis; carbamoyl phosphate from bicarbonate: step 1/1. It functions in the pathway pyrimidine metabolism; UMP biosynthesis via de novo pathway; (S)-dihydroorotate from bicarbonate: step 1/3. Its function is as follows. Large subunit of the glutamine-dependent carbamoyl phosphate synthetase (CPSase). CPSase catalyzes the formation of carbamoyl phosphate from the ammonia moiety of glutamine, carbonate, and phosphate donated by ATP, constituting the first step of 2 biosynthetic pathways, one leading to arginine and/or urea and the other to pyrimidine nucleotides. The large subunit (synthetase) binds the substrates ammonia (free or transferred from glutamine from the small subunit), hydrogencarbonate and ATP and carries out an ATP-coupled ligase reaction, activating hydrogencarbonate by forming carboxy phosphate which reacts with ammonia to form carbamoyl phosphate. This chain is Carbamoyl phosphate synthase large chain, found in Leuconostoc citreum (strain KM20).